A 415-amino-acid chain; its full sequence is Multidrug resistance protein MdtA (415 aa).

The first 21 residues, 1–21, serve as a signal peptide directing secretion; the sequence is MKSTVKKRGWVIAGIVVVALA. The interval 387-415 is disordered; that stretch reads AQTAADAAKPERGERAPTDSARAAKGARS. Residues 394-403 show a composition bias toward basic and acidic residues; it reads AKPERGERAP.

The protein belongs to the membrane fusion protein (MFP) (TC 8.A.1) family. Part of a tripartite efflux system composed of MdtA, MdtB and MdtC.

Its subcellular location is the cell inner membrane. The polypeptide is Multidrug resistance protein MdtA (Cronobacter turicensis (strain DSM 18703 / CCUG 55852 / LMG 23827 / z3032)).